The chain runs to 605 residues: UvrABC system protein C (605 aa).

Positions 13–92 (SEPGVYLMKD…IKRYRPKYNV (80 aa)) constitute a GIY-YIG domain. Positions 205 to 240 (EKLMELLKEKMNESSMNFRFEEAAVYRDKIKSLEEM) constitute a UVR domain.

Belongs to the UvrC family. Interacts with UvrB in an incision complex.

The protein localises to the cytoplasm. In terms of biological role, the UvrABC repair system catalyzes the recognition and processing of DNA lesions. UvrC both incises the 5' and 3' sides of the lesion. The N-terminal half is responsible for the 3' incision and the C-terminal half is responsible for the 5' incision. The sequence is that of UvrABC system protein C from Clostridioides difficile (strain 630) (Peptoclostridium difficile).